The sequence spans 239 residues: Chlorate reductase subunit gamma (239 aa).

An N-terminal signal peptide occupies residues 1-27; it reads MKTNILVKRMAVIGLAVAAACTGAAAA. The heme b site is built by His74 and Met138.

In terms of assembly, heterotrimer of alpha, beta and gamma subunits. Heme b is required as a cofactor.

The protein resides in the periplasm. Its function is as follows. May transfer electrons to the iron-sulfur centers of ClrB. This Ideonella dechloratans protein is Chlorate reductase subunit gamma (clrC).